A 625-amino-acid polypeptide reads, in one-letter code: MAHGCSGGAMSRFVFLGVALALLGGATSPAAAAPRVTPVVVDVDDYGADPTGRTDSTPAVAAALRHAKSVDRPVRIVFSKGTYQLYPERAETRELYMSNTVGADQRYRDKKIGLLVEDMHDVTVDGGGAKLVHHGLQTAFASIRSTDVTFQNFSFDYAAPEVIDATVATTGVTDGHAYRVLKIPAGSPYRVNGTHITWLGETSPATGQPYWSGVDGLQYTQIHDPEAQRTWRGDNPLFNDVAAVTDLGGRRIRIDYTTAARPADAGLVYQMRLIERTEPGAFIWESKNVTMRSMNAYYLQSFGVVGQFSENISIDKVNFAPDPRSGRSTASFADFVQMSGVKGKVSITRSLFDGPHDDPINIHGTYLEVVGKPGPSTLTLAYKHPQTAGFPQFAPGDEVEFATKRTMTPLADAHAQVTAVDGPSGMDHTKPLTTMTVTFDRPVPAGVETGGTVVENITATPSVVISGNVFRNVPTRGILVTTRKPVLITGNRFDGMSMASIYVSADAYQWYESGPVADLTIRGNSFTRPSGPVIFVEPTNQVIDPATPVHHNISVEHNSFDIGDVTVVNAKSVGGFAFTGNTVRRLDGADHPPYTSPLFVFHGSSGIRIARNHYDKGLNTSVVTD.

Positions 1–32 (MAHGCSGGAMSRFVFLGVALALLGGATSPAAA) are cleaved as a signal peptide. PbH1 repeat units lie at residues 342–364 (KGKVSITRSLFDGPHDDPINIHG), 460–482 (TPSVVISGNVFRNVPTRGILVTT), 483–505 (RKPVLITGNRFDGMSMASIYVSA), 516–537 (VADLTIRGNSFTRPSGPVIFVE), and 573–611 (VGGFAFTGNTVRRLDGADHPPYTSPLFVFHGSSGIRIAR).

The protein belongs to the glycosyl hydrolase 110 family. A subfamily.

The enzyme catalyses Hydrolysis of terminal, non-reducing branched (1-&gt;3)-alpha-D-galactosidic residues, producing free D-galactose.. The catalysed reaction is Hydrolysis of terminal, non-reducing alpha-D-galactose residues in alpha-D-galactosides, including galactose oligosaccharides, galactomannans and galactolipids.. Functionally, alpha-galactosidase that specifically removes branched alpha-1,3-linked galactose residues present in blood group B antigens. Has no activity toward linear alpha-1,3-linked galactose residues. This is Alpha-1,3-galactosidase A (glaA) from Streptomyces avermitilis (strain ATCC 31267 / DSM 46492 / JCM 5070 / NBRC 14893 / NCIMB 12804 / NRRL 8165 / MA-4680).